The chain runs to 191 residues: MDMIGMASPAESPGGGGTARPSRYESQKRRDWQTFGQYLRNHRPPLELSRCSGAHVLEFLRYLDQFGKTKVHAHGCPFFGHPSPPAPCPCPLRQAWGSLDALVGRLRAAFEEHGGRPESNPFGARAVRLYLRDIRDTQSKARGIAYEKKRRKRAAASHTKQKQQQQQLVEQAAAAAEAHAAGCMMPLSVFN.

A disordered region spans residues 1–29 (MDMIGMASPAESPGGGGTARPSRYESQKR). An ALOG domain is found at 23-150 (RYESQKRRDW…ARGIAYEKKR (128 aa)). The Nuclear localization signal signature appears at 148–152 (KKRRK). Residues 152 to 179 (KRAAASHTKQKQQQQQLVEQAAAAAEAH) are a coiled coil.

It belongs to the plant homeotic and developmental regulators ALOG protein family.

Its subcellular location is the nucleus. In terms of biological role, probable transcription regulator that acts as a developmental regulator by promoting cell growth in response to light. This Oryza sativa subsp. indica (Rice) protein is Protein G1-like1.